A 248-amino-acid chain; its full sequence is Protein canopy homolog 4 (248 aa).

The N-terminal stretch at 1-21 (MGPVRLGILLFLFLAVHEAWA) is a signal peptide. Disulfide bonds link Cys38-Cys196, Cys41-Cys184, and Cys94-Cys156. Residues 200-248 (TWTGKEITDGEEKTEGEEEQEEEEEEEEEEGGDKMTKTGSHPKLDREDL) form a disordered region. A compositionally biased stretch (acidic residues) spans 213 to 230 (TEGEEEQEEEEEEEEEEG). Residues 231-248 (GDKMTKTGSHPKLDREDL) show a composition bias toward basic and acidic residues.

Belongs to the canopy family. In terms of assembly, interacts with TLR4.

It localises to the secreted. Its function is as follows. Plays a role in the regulation of the cell surface expression of TLR4. The chain is Protein canopy homolog 4 (CNPY4) from Homo sapiens (Human).